A 318-amino-acid chain; its full sequence is UAP56-interacting factor (318 aa).

Residue Met1 is modified to N-acetylmethionine. The disordered stretch occupies residues 1-27 (MNRFSTRLMGATATPPPAPPKARSNEN). Thr14 is subject to Phosphothreonine. Phosphoserine is present on Ser24. The UAP56-binding motif motif lies at 27–45 (NLDKIDMSLDDIIKLNRKE). Residues Ser61 and Ser118 each carry the phosphoserine modification. A Glycyl lysine isopeptide (Lys-Gly) (interchain with G-Cter in SUMO1) cross-link involves residue Lys140. A compositionally biased stretch (polar residues) spans 163 to 180 (LNRKNNIPNNFTRSGNKL). A disordered region spans residues 163 to 183 (LNRKNNIPNNFTRSGNKLSHQ). Residue Lys261 forms a Glycyl lysine isopeptide (Lys-Gly) (interchain with G-Cter in SUMO2) linkage.

It belongs to the UIF family. In terms of assembly, interacts with DDX39B/UAP56 and NXF1; interaction with DDX39B/UAP56 and NXF1 are mutually exclusive. Interacts with SSRP1; required for its recruitment to mRNAs. Interacts with CHTOP.

It localises to the nucleus. The protein resides in the nucleoplasm. It is found in the nucleus speckle. Functionally, required for mRNA export from the nucleus to the cytoplasm. Acts as an adapter that uses the DDX39B/UAP56-NFX1 pathway to ensure efficient mRNA export and delivering to the nuclear pore. Associates with spliced and unspliced mRNAs simultaneously with ALYREF/THOC4. This is UAP56-interacting factor (FYTTD1) from Bos taurus (Bovine).